Consider the following 210-residue polypeptide: Thymidylate kinase (210 aa).

11 to 18 (GLEGAGKS) lines the ATP pocket.

This sequence belongs to the thymidylate kinase family.

It catalyses the reaction dTMP + ATP = dTDP + ADP. In terms of biological role, phosphorylation of dTMP to form dTDP in both de novo and salvage pathways of dTTP synthesis. The chain is Thymidylate kinase from Histophilus somni (strain 2336) (Haemophilus somnus).